A 602-amino-acid polypeptide reads, in one-letter code: Elongation factor 4 (602 aa).

The 183-residue stretch at 7 to 189 folds into the tr-type G domain; sequence SRLRNFCIIA…AVVERVPPPK (183 aa). GTP contacts are provided by residues 19-24 and 136-139; these read DHGKST and NKVD.

Belongs to the TRAFAC class translation factor GTPase superfamily. Classic translation factor GTPase family. LepA subfamily.

It is found in the cell inner membrane. The enzyme catalyses GTP + H2O = GDP + phosphate + H(+). Functionally, required for accurate and efficient protein synthesis under certain stress conditions. May act as a fidelity factor of the translation reaction, by catalyzing a one-codon backward translocation of tRNAs on improperly translocated ribosomes. Back-translocation proceeds from a post-translocation (POST) complex to a pre-translocation (PRE) complex, thus giving elongation factor G a second chance to translocate the tRNAs correctly. Binds to ribosomes in a GTP-dependent manner. The protein is Elongation factor 4 of Prochlorococcus marinus (strain MIT 9211).